A 334-amino-acid polypeptide reads, in one-letter code: D-fructose 1,6-bisphosphatase class 2/sedoheptulose 1,7-bisphosphatase (334 aa).

Residues Asp-33, Glu-57, Asp-85, and Glu-88 each coordinate Mn(2+). Residues 88-90 (EGT), Tyr-119, 164-166 (RAR), and 186-188 (DGD) contribute to the substrate site. Glu-213 lines the Mn(2+) pocket.

This sequence belongs to the FBPase class 2 family. In terms of assembly, homotetramer. It depends on Mn(2+) as a cofactor.

It carries out the reaction beta-D-fructose 1,6-bisphosphate + H2O = beta-D-fructose 6-phosphate + phosphate. The catalysed reaction is D-sedoheptulose 1,7-bisphosphate + H2O = D-sedoheptulose 7-phosphate + phosphate. It participates in carbohydrate biosynthesis; Calvin cycle. Functionally, catalyzes the hydrolysis of fructose 1,6-bisphosphate (Fru 1,6-P2) and sedoheptulose 1,7-bisphosphate (Sed 1,7-P2) to fructose 6-phosphate and sedoheptulose 7-phosphate, respectively. The sequence is that of D-fructose 1,6-bisphosphatase class 2/sedoheptulose 1,7-bisphosphatase from Parasynechococcus marenigrum (strain WH8102).